Consider the following 130-residue polypeptide: Ornithine decarboxylase antizyme (130 aa).

The segment covering 1-14 (SDVPVHHRTDHDRA) has biased composition (basic and acidic residues). The interval 1-56 (SDVPVHHRTDHDRASLLTGSSRKSSVDSAGGSLFEASSRASSPSSSSSSECSDTES) is disordered. Positions 17 to 27 (LTGSSRKSSVD) are enriched in polar residues. Over residues 32–51 (SLFEASSRASSPSSSSSSEC) the composition is skewed to low complexity.

The protein belongs to the ODC antizyme family. As to quaternary structure, interacts with ODC1 and thereby sterically blocks ODC homodimerization.

Ornithine decarboxylase (ODC) antizyme protein that negatively regulates ODC activity and intracellular polyamine biosynthesis and uptake in response to increased intracellular polyamine levels. Binds to ODC monomers, inhibiting the assembly of the functional ODC homodimer, and targets the monomers for ubiquitin-independent proteolytic destruction by the 26S proteasome. This Drosophila virilis (Fruit fly) protein is Ornithine decarboxylase antizyme (Oda).